We begin with the raw amino-acid sequence, 743 residues long: MSSNSSCLVTNQGGALPLTATCLEGFYCPNNSLENPPEICPPTPQCRLTRLQEYHNICDHAQGTYEPIVCQPGFYCPSGGKRQIPCPKGHFCPLGTVEPFKCFGLSSCAEGSEREIPLAGLLCSILLDIFLVIVVSWPFPFAWIRQLSRGKLRRGAGGNDSESGVISAGRREISFSESKYHVSQFFTSDGSHGTAAGIEVEFSGISMRPTRSGIETLCLQNGVIRAGSFVGVMGPSGSGKSTLVKVLTGRAQPTTGSVLINGDTCRAAELRDLLALVPQDDIILPDLTVQENILYSSRVRIGSSRKDSEIEQYVDHLIISLGLNKVRNRLIGEVGKRGLSGGERKRVNIALELAAVPGIIVLDEPTSGLDAMTALSVIELLKSLTKQGVIVICVIHQPRLEIFAALDDLLLLNHGRQVYFGSAAAAKQCFQDAGYTFPLNSNPTDTMMDIMSCHDNLHLTDYPRNKPALPKQNLRIVLQSVKKIRAPWYCQVLLAFMRGTKQQTRQYPSFVLEILTGAGCGILIGLSNYEFKGHLFQGLFHLPFQLLSSPVSYRLLTEQGMLLCLTIGCAAGPAGVKTFGEEKLVFLRESCSGYSEGAYFLGKALSTLIRIFLSALHFTSFYLILTTPIVSFPNQLIVNLLYFYCIYGAASMISAITSPKNGPLITMLTSVLFCALSGCAPRLASVKSWNLAWLWYICPAVWIAEANFNQYTDPLAYLYDIKPAAEDAIRAWDRLSLHSLFIV.

Asparagine 4 and asparagine 30 each carry an N-linked (GlcNAc...) asparagine glycan. A helical transmembrane segment spans residues 124 to 144; sequence SILLDIFLVIVVSWPFPFAWI. Asparagine 159 carries an N-linked (GlcNAc...) asparagine glycan. The region spanning 200–439 is the ABC transporter domain; the sequence is VEFSGISMRP…FQDAGYTFPL (240 aa). 234–241 serves as a coordination point for ATP; sequence GPSGSGKS. 5 consecutive transmembrane segments (helical) span residues 507-527, 560-580, 611-631, 636-656, and 661-681; these read YPSF…IGLS, GMLL…KTFG, IFLS…PIVS, LIVN…ISAI, and NGPL…GCAP.

It belongs to the ABC transporter superfamily. ABCG family.

The protein localises to the membrane. Its function is as follows. ABC-type transporter; part of the cla gene cluster that produces clavatol and ortho-quinone methide. The clavatol biosynthesis cluster cla and the terrestric acid cluster tra are both involved in the production of peniphenones and penilactones. This chain is ABC-type transporter claG, found in Penicillium crustosum (Blue mold fungus).